Here is a 77-residue protein sequence, read N- to C-terminus: MIYKVFYQETKERSPRRETTRALYLDIDASSELEGRITARQLVEENRPEYNIEYIELLSDKLLDYEKETGAFEITEF.

Belongs to the RNA polymerase subunit epsilon family. RNAP is composed of a core of 2 alpha, a beta and a beta' subunit. The core is associated with a delta subunit, and at least one of epsilon or omega. When a sigma factor is associated with the core the holoenzyme is formed, which can initiate transcription.

It catalyses the reaction RNA(n) + a ribonucleoside 5'-triphosphate = RNA(n+1) + diphosphate. Functionally, a non-essential component of RNA polymerase (RNAP). This chain is DNA-directed RNA polymerase subunit epsilon, found in Streptococcus pneumoniae serotype 19F (strain G54).